The chain runs to 978 residues: Translation initiation factor IF-2 (978 aa).

2 disordered regions span residues 107–129 (AEAP…NLEL) and 146–387 (QEEE…HRVQ). Residues 146-169 (QEEELSERRRQREEQEARSREASE) are compositionally biased toward basic and acidic residues. The segment covering 170–186 (KAAAVAAEAAEAAAAQA) has biased composition (low complexity). Basic and acidic residues predominate over residues 215 to 259 (AEKEQHLAKEKGLAREKELAESKARAAEDVVRAADLGDRRRKAES). Composition is skewed to low complexity over residues 295–326 (KPAA…AGAG) and 349–361 (PTRG…GAGR). Over residues 375-386 (GSSDRDRDDHRV) the composition is skewed to basic and acidic residues. The tr-type G domain maps to 478-647 (PRAPVVTVMG…LLQAEVLELK (170 aa)). The segment at 487–494 (GHVDHGKT) is G1. 487-494 (GHVDHGKT) provides a ligand contact to GTP. The segment at 512-516 (GITQH) is G2. The tract at residues 533–536 (DTPG) is G3. Residues 533-537 (DTPGH) and 587-590 (NKID) contribute to the GTP site. Residues 587–590 (NKID) are G4. Residues 623–625 (SAK) form a G5 region.

It belongs to the TRAFAC class translation factor GTPase superfamily. Classic translation factor GTPase family. IF-2 subfamily.

The protein resides in the cytoplasm. Its function is as follows. One of the essential components for the initiation of protein synthesis. Protects formylmethionyl-tRNA from spontaneous hydrolysis and promotes its binding to the 30S ribosomal subunits. Also involved in the hydrolysis of GTP during the formation of the 70S ribosomal complex. This is Translation initiation factor IF-2 from Albidiferax ferrireducens (strain ATCC BAA-621 / DSM 15236 / T118) (Rhodoferax ferrireducens).